Here is a 166-residue protein sequence, read N- to C-terminus: Phospholipase A2 inhibitor clone 04 (166 aa).

The N-terminal stretch at 1-19 (MRLILLSSLLLLGIFLANG) is a signal peptide. A C-type lectin domain is found at 46-161 (LKDAFLTVHR…CDDNRLVVCE (116 aa)). 2 cysteine pairs are disulfide-bonded: Cys-83/Cys-160 and Cys-138/Cys-152. Asn-122 is a glycosylation site (N-linked (GlcNAc...) asparagine).

Belongs to the alpha-type phospholipase A2 inhibitor family. As to quaternary structure, homotrimer; non-covalently linked. Expressed by the liver.

It localises to the secreted. Functionally, this phospholipase A2 inhibitor binds directly phospholipase A2 in the presence or absence of calcium. The chain is Phospholipase A2 inhibitor clone 04 from Bothrops moojeni (Lance-headed viper).